The following is a 764-amino-acid chain: Probable glutamate--tRNA ligase, cytoplasmic (764 aa).

228-230 contributes to the L-glutamate binding site; the sequence is RFP. The 'HIGH' region motif lies at 233-242; sequence PSGYMHIGHC. Residue histidine 238 participates in ATP binding. Residues aspartate 264, 404 to 408, and arginine 422 contribute to the L-glutamate site; that span reads YDFAC. Residues glutamate 425 and 460–464 contribute to the ATP site; that span reads LLSKR. The 'KMSKS' region motif lies at 460-464; that stretch reads LLSKR.

The protein belongs to the class-I aminoacyl-tRNA synthetase family. Glutamate--tRNA ligase type 2 subfamily.

The protein localises to the cytoplasm. The enzyme catalyses tRNA(Glu) + L-glutamate + ATP = L-glutamyl-tRNA(Glu) + AMP + diphosphate. Its function is as follows. Catalyzes the attachment of glutamate to tRNA(Glu) in a two-step reaction: glutamate is first activated by ATP to form Glu-AMP and then transferred to the acceptor end of tRNA(Glu). The chain is Probable glutamate--tRNA ligase, cytoplasmic (gluS) from Dictyostelium discoideum (Social amoeba).